The sequence spans 274 residues: Methionine-binding lipoprotein MetQ (274 aa).

A signal peptide spans 1-19; it reads MKKLFLGALLLVFAGVMAA. Residue Cys-20 is the site of N-palmitoyl cysteine attachment. Cys-20 carries S-diacylglycerol cysteine lipidation.

It belongs to the NlpA lipoprotein family. In terms of assembly, the complex is composed of two ATP-binding proteins (MetN), two transmembrane proteins (MetP) and a solute-binding protein (metQ).

The protein resides in the cell membrane. Part of the ABC transporter complex MetNPQ involved in methionine import. Binds the methionine and transfers it to the membrane-bound permease. It has also been shown to be involved in methionine sulfoxide transport. The sequence is that of Methionine-binding lipoprotein MetQ (metQ) from Bacillus subtilis (strain 168).